The sequence spans 476 residues: Transposase for transposon Tn5 (476 aa).

Positions 1–70 (MITSALHRAA…YRFIRNPNVS (70 aa)) are interaction with DNA. Residues D97 and D188 each coordinate Mg(2+). Interaction with DNA regions lie at residues 237 to 255 (YQISIPQKGVVDKRGKRKN) and 319 to 348 (YTHRWRIEEFHKAWKTGAGAERQRMEEPDN). E326 contacts Mg(2+). Residues 369-476 (SFTLPQALRA…KDLMAQGIKI (108 aa)) form an important for dimerization region.

This sequence belongs to the transposase 11 family. As to quaternary structure, monomer. Homodimer of tnp (isoform 1), and heterodimer of tnp (isoform 1) and inh (isoform 2). Mg(2+) is required as a cofactor.

In terms of biological role, mediates transposition of transposon Tn5 by a 'cut and paste' mechanism. First, the monomeric transposase binds the 19 bp inverted DNA repeats flanking the transposon. Then, dimerization of the DNA-bound transposase creates a synaptic DNA complex. After nicking of the first DNA strand, excision of the transposon proceeds through a series of intermediates. The transposase then mediates the insertion of the transposon at a new site by strand transfer. The activity of the wild-type transposase is very low, and is further inhibited by dimerization with the transposase inhibitor (inh). The chain is Transposase for transposon Tn5 (tnpA) from Escherichia coli.